A 247-amino-acid chain; its full sequence is Probable phosphatase Shew_1420 (247 aa).

Zn(2+) is bound by residues H8, H10, H16, H41, E74, H102, H132, D193, and H195.

This sequence belongs to the PHP family. The cofactor is Zn(2+).

This is Probable phosphatase Shew_1420 from Shewanella loihica (strain ATCC BAA-1088 / PV-4).